Here is a 255-residue protein sequence, read N- to C-terminus: NAD kinase (255 aa).

Asp-44 acts as the Proton acceptor in catalysis. Residues 44 to 45 (DG), 114 to 115 (NE), Asp-144, Ala-152, and 155 to 160 (TAYNLS) each bind NAD(+).

The protein belongs to the NAD kinase family. The cofactor is a divalent metal cation.

The protein resides in the cytoplasm. The enzyme catalyses NAD(+) + ATP = ADP + NADP(+) + H(+). Functionally, involved in the regulation of the intracellular balance of NAD and NADP, and is a key enzyme in the biosynthesis of NADP. Catalyzes specifically the phosphorylation on 2'-hydroxyl of the adenosine moiety of NAD to yield NADP. The chain is NAD kinase from Hyphomonas neptunium (strain ATCC 15444).